Consider the following 464-residue polypeptide: 2-oxoadipate dioxygenase/decarboxylase (464 aa).

The 2-oxoadipate site is built by His70, Arg74, and His226. Residue His70 participates in Fe(2+) binding. Positions 226 and 294 each coordinate Fe(2+). Val402 is a 2-oxoadipate binding site.

The protein belongs to the 2-oxoadipate dioxygenase/decarboxylase family. The cofactor is Fe(2+).

It carries out the reaction 2-oxoadipate + O2 = (R)-2-hydroxyglutarate + CO2. Its pathway is amino-acid degradation. With respect to regulation, inhibited by EDTA. Its function is as follows. Catalyzes the decarboxylation and hydroxylation of 2-oxoadipate (2OA) to form D-2-hydroxyglutarate (D-2-HGA). Is specific for 2-oxoadipate. Is involved in a D-lysine catabolic pathway. In Pseudomonas putida (strain ATCC 47054 / DSM 6125 / CFBP 8728 / NCIMB 11950 / KT2440), this protein is 2-oxoadipate dioxygenase/decarboxylase.